Reading from the N-terminus, the 603-residue chain is Elongation factor 4 (603 aa).

The tr-type G domain maps to Val7 to Pro189. Residues Asp19 to Thr24 and Asn136 to Asp139 contribute to the GTP site.

The protein belongs to the TRAFAC class translation factor GTPase superfamily. Classic translation factor GTPase family. LepA subfamily.

It is found in the cell inner membrane. The enzyme catalyses GTP + H2O = GDP + phosphate + H(+). Its function is as follows. Required for accurate and efficient protein synthesis under certain stress conditions. May act as a fidelity factor of the translation reaction, by catalyzing a one-codon backward translocation of tRNAs on improperly translocated ribosomes. Back-translocation proceeds from a post-translocation (POST) complex to a pre-translocation (PRE) complex, thus giving elongation factor G a second chance to translocate the tRNAs correctly. Binds to ribosomes in a GTP-dependent manner. The protein is Elongation factor 4 of Nostoc punctiforme (strain ATCC 29133 / PCC 73102).